The sequence spans 237 residues: UPF0502 protein RB6530 (237 aa).

Over residues Ala-187–Pro-202 the composition is skewed to polar residues. The disordered stretch occupies residues Ala-187 to Ile-211.

It belongs to the UPF0502 family.

This is UPF0502 protein RB6530 from Rhodopirellula baltica (strain DSM 10527 / NCIMB 13988 / SH1).